The sequence spans 215 residues: Eukaryotic translation initiation factor 4E-1 (215 aa).

The segment at 1–32 is disordered; the sequence is MAEDTETRPASAGAEEREEGEIADDGDGSSAA. Residues 16–27 show a composition bias toward acidic residues; sequence EREEGEIADDGD. 2 EIF4G-binding regions span residues 40-43 and 50-86; these read HPLE and FDNPQGKSRQVAWGSTIHPIHTFSTVEDFWGLYNNIH. Residues 58-63, lysine 90, and 108-109 contribute to the mRNA site; these read RQVAWG and WE. Cysteines 113 and 151 form a disulfide. Positions 134–143 are EIF4G-binding; the sequence is HTLLAMIGEQ. MRNA contacts are provided by residues 158–163 and 203–207; these read RQKQER and KRSDK.

It belongs to the eukaryotic initiation factor 4E family. In terms of assembly, EIF4F is a multi-subunit complex, the composition of which varies with external and internal environmental conditions. It is composed of at least EIF4A, EIF4E and EIF4G. EIF4E is also known to interact with other partners. In higher plants two isoforms of EIF4F have been identified, named isoform EIF4F and isoform EIF(iso)4F. Isoform EIF4F has subunits p220 and p26, whereas isoform EIF(iso)4F has subunits p82 and p28. According to the redox status, the Cys-113-Cys-151 disulfide bridge may have a role in regulating protein function by affecting its ability to bind capped mRNA.

It localises to the nucleus. The protein resides in the cytoplasm. Its function is as follows. Component of the protein complex eIF4F, which is involved in the recognition of the mRNA cap, ATP-dependent unwinding of 5'-terminal secondary structure and recruitment of mRNA to the ribosome. Recognizes and binds the 7-methylguanosine-containing mRNA cap during an early step in the initiation of protein synthesis and facilitates ribosome binding by inducing the unwinding of the mRNAs secondary structures. This is Eukaryotic translation initiation factor 4E-1 from Triticum aestivum (Wheat).